Here is a 422-residue protein sequence, read N- to C-terminus: L-threonine dehydratase biosynthetic IlvA (422 aa).

N6-(pyridoxal phosphate)lysine is present on Lys56. Residues Asn83, 189–193 (GGGGL), and Ser315 each bind pyridoxal 5'-phosphate. Residues 339–413 (HYFILNFPQR…FDPSNIYINE (75 aa)) form the ACT-like domain.

It belongs to the serine/threonine dehydratase family. Homotetramer. Pyridoxal 5'-phosphate is required as a cofactor.

It catalyses the reaction L-threonine = 2-oxobutanoate + NH4(+). The protein operates within amino-acid biosynthesis; L-isoleucine biosynthesis; 2-oxobutanoate from L-threonine: step 1/1. Its function is as follows. Catalyzes the anaerobic formation of alpha-ketobutyrate and ammonia from threonine in a two-step reaction. The first step involved a dehydration of threonine and a production of enamine intermediates (aminocrotonate), which tautomerizes to its imine form (iminobutyrate). Both intermediates are unstable and short-lived. The second step is the nonenzymatic hydrolysis of the enamine/imine intermediates to form 2-ketobutyrate and free ammonia. In the low water environment of the cell, the second step is accelerated by RidA. This is L-threonine dehydratase biosynthetic IlvA (ilvA) from Staphylococcus aureus (strain bovine RF122 / ET3-1).